A 307-amino-acid polypeptide reads, in one-letter code: Cilia-and flagella-associated protein 96 (307 aa).

2 disordered regions span residues 73-102 and 218-279; these read YSDP…SSGE and HSQK…GPKT.

It belongs to the CFAP96 family.

The protein localises to the cytoplasm. It localises to the cytoskeleton. The protein resides in the microtubule organizing center. It is found in the centrosome. This chain is Cilia-and flagella-associated protein 96 (cfap96.L), found in Xenopus laevis (African clawed frog).